A 324-amino-acid polypeptide reads, in one-letter code: MPVNIKQLAQEFDKKEIGITQGHRLCPGCGAPITVKFVMMIARHLGYEPVVGLATGCLEVSTSIYPYTAWSVPYIHNAFENVAATMSGVETAYKALKNKGKIPEDKKYAFIAFGGDGGTYDIGLQSLSGMLERGHKVLYVLYDNEGYMNTGNQRSGSTPPGSDTTTAPVGKKLPGKVQLKKNIVEIVAAHENVYAATASLSEPMDFFAKVEKALNFDGPSFLAVFSPCVRFWRVNDDKTVEISKLAVETKYWPLYEVERGVYRVTRKPRQFKPVEEFLKAQGRFRKLLSRPDAKEIVDELQEYVDRRWERLLTLEEVTKDKPIR.

Positions 26, 29, and 57 each coordinate [4Fe-4S] cluster. The tract at residues Thr150–Lys172 is disordered. A compositionally biased stretch (low complexity) spans Ser155–Thr166. A [4Fe-4S] cluster-binding site is contributed by Cys228.

In terms of assembly, heterotetramer of one alpha, one beta, one delta and one gamma chain. It depends on [4Fe-4S] cluster as a cofactor.

The enzyme catalyses 2 oxidized [2Fe-2S]-[ferredoxin] + pyruvate + CoA = 2 reduced [2Fe-2S]-[ferredoxin] + acetyl-CoA + CO2 + H(+). This Thermotoga maritima (strain ATCC 43589 / DSM 3109 / JCM 10099 / NBRC 100826 / MSB8) protein is Pyruvate synthase subunit PorB (porB).